The chain runs to 705 residues: Elongation factor G 2 (705 aa).

The region spanning 8-290 (ELYRNIGISA…AVLDYLPSPL (283 aa)) is the tr-type G domain. Residues 17 to 24 (AHIDAGKT), 88 to 92 (DTPGH), and 142 to 145 (NKMD) each bind GTP.

Belongs to the TRAFAC class translation factor GTPase superfamily. Classic translation factor GTPase family. EF-G/EF-2 subfamily.

The protein resides in the cytoplasm. Its function is as follows. Catalyzes the GTP-dependent ribosomal translocation step during translation elongation. During this step, the ribosome changes from the pre-translocational (PRE) to the post-translocational (POST) state as the newly formed A-site-bound peptidyl-tRNA and P-site-bound deacylated tRNA move to the P and E sites, respectively. Catalyzes the coordinated movement of the two tRNA molecules, the mRNA and conformational changes in the ribosome. The polypeptide is Elongation factor G 2 (Bordetella avium (strain 197N)).